A 424-amino-acid chain; its full sequence is UDP-N-acetylglucosamine 1-carboxyvinyltransferase (424 aa).

Residue lysine 22–asparagine 23 participates in phosphoenolpyruvate binding. Arginine 93 contributes to the UDP-N-acetyl-alpha-D-glucosamine binding site. Cysteine 117 functions as the Proton donor in the catalytic mechanism. Residue cysteine 117 is modified to 2-(S-cysteinyl)pyruvic acid O-phosphothioketal. UDP-N-acetyl-alpha-D-glucosamine-binding positions include arginine 122–leucine 126, aspartate 307, and valine 329.

The protein belongs to the EPSP synthase family. MurA subfamily.

The protein localises to the cytoplasm. It carries out the reaction phosphoenolpyruvate + UDP-N-acetyl-alpha-D-glucosamine = UDP-N-acetyl-3-O-(1-carboxyvinyl)-alpha-D-glucosamine + phosphate. Its pathway is cell wall biogenesis; peptidoglycan biosynthesis. In terms of biological role, cell wall formation. Adds enolpyruvyl to UDP-N-acetylglucosamine. In Pelodictyon phaeoclathratiforme (strain DSM 5477 / BU-1), this protein is UDP-N-acetylglucosamine 1-carboxyvinyltransferase.